Reading from the N-terminus, the 518-residue chain is E3 ubiquitin-protein ligase TRIM39 (518 aa).

The RING-type zinc-finger motif lies at 29-70 (CSVCLEYLKEPVIIECGHNFCKACITRWWEDLERDFPCPVCR). The B box-type zinc finger occupies 102–143 (RDESLCPQHHEALSLFCYEDQEAVCLICAISHTHRAHTVVPL). Zn(2+) is bound by residues C107, H110, C129, and H135. Residues 181-250 (ELKRLVESRR…AHLAAEVEGK (70 aa)) are a coiled coil. Interaction with CDKN1A stretches follow at residues 268–337 (KNIP…QLIA) and 389–518 (TSGR…TDWE). The region spanning 319-514 (SNFPRQYFAL…NAAPLTIRPP (196 aa)) is the B30.2/SPRY domain.

This sequence belongs to the TRIM/RBCC family. As to quaternary structure, interacts with MOAP1. Interacts with CDKN1A. Post-translationally, autoubiquitinated.

It is found in the cytoplasm. The protein resides in the cytosol. The protein localises to the mitochondrion. It localises to the nucleus. The enzyme catalyses S-ubiquitinyl-[E2 ubiquitin-conjugating enzyme]-L-cysteine + [acceptor protein]-L-lysine = [E2 ubiquitin-conjugating enzyme]-L-cysteine + N(6)-ubiquitinyl-[acceptor protein]-L-lysine.. The protein operates within protein modification; protein ubiquitination. In terms of biological role, E3 ubiquitin-protein ligase. May facilitate apoptosis by inhibiting APC/C-Cdh1-mediated poly-ubiquitination and subsequent proteasome-mediated degradation of the pro-apoptotic protein MOAP1. Regulates the G1/S transition of the cell cycle and DNA damage-induced G2 arrest by stabilizing CDKN1A/p21. Positively regulates CDKN1A/p21 stability by competing with DTL for CDKN1A/p21 binding, therefore disrupting DCX(DTL) E3 ubiquitin ligase complex-mediated CDKN1A/p21 ubiquitination and degradation. This chain is E3 ubiquitin-protein ligase TRIM39 (TRIM39), found in Pan troglodytes (Chimpanzee).